The primary structure comprises 196 residues: Translation machinery-associated protein 22 (196 aa).

In terms of domain architecture, SUI1 spans 97–168; it reads VIVKREARTK…EVVAYIHSLL (72 aa).

It belongs to the DENR family. In terms of assembly, interacts with the 40S ribosomal subunit.

It is found in the cytoplasm. This Candida glabrata (strain ATCC 2001 / BCRC 20586 / JCM 3761 / NBRC 0622 / NRRL Y-65 / CBS 138) (Yeast) protein is Translation machinery-associated protein 22 (TMA22).